Consider the following 250-residue polypeptide: Maleate isomerase (250 aa).

Residues Asn-15, 80 to 82, Tyr-137, and Asn-167 each bind substrate; that span reads CLV. The active-site Nucleophile is the Cys-80. Residue Cys-80 is modified to S-(2-succinyl)cysteine. The Proton donor role is filled by Cys-198. Residue 199–200 participates in substrate binding; it reads VQ.

Belongs to the maleate isomerase family. Homodimer.

The enzyme catalyses maleate = fumarate. The protein operates within cofactor degradation; nicotinate degradation. In terms of biological role, catalyzes cis-trans isomerization of the C2-C3 double bond in maleate to yield fumarate in the aerobic nicotinate degradation pathway. This is Maleate isomerase from Pseudomonas putida (strain ATCC 47054 / DSM 6125 / CFBP 8728 / NCIMB 11950 / KT2440).